A 651-amino-acid polypeptide reads, in one-letter code: Endo-1,4-beta-xylanase A (651 aa).

The first 30 residues, 1–30 (MKRKVKKMAAMATSIIMAIMIILHSIPVLA), serve as a signal peptide directing secretion. The region spanning 33–227 (IIYDNETGTH…SSGYANVYKN (195 aa)) is the GH11 domain. The active-site Nucleophile is Glu124. Residue Glu214 is the Proton donor of the active site. 3 CBM6 domains span residues 250-370 (SIIE…FIFS), 387-507 (SIIQ…FVFT), and 527-647 (SNIQ…FVFS). The Ca(2+) site is built by Glu253 and Glu255. D-xylotriose is bound at residue Thr270. Arg275 is a binding site for Ca(2+). Copy 1 of the repeat occupies 278 to 339 (GYIENGNTVT…SSTGSWNTYQ (62 aa)). The tract at residues 278 to 616 (GYIENGNTVT…GSTGSFDTYR (339 aa)) is 3 X 61 AA approximate repeats. D-xylotriose contacts are provided by Tyr279, Asn336, and Asn363. D-xylobiose contacts are provided by Tyr279, Asn336, and Asn363. Asp365 contributes to the Ca(2+) binding site. Repeat unit 2 spans residues 415–476 (GYIENGYSTT…PSTNSWDSYQ (62 aa)). Residues Gln530, Glu532, and Ser552 each coordinate Ca(2+). The stretch at 555–616 (GYIENGYSTT…GSTGSFDTYR (62 aa)) is repeat 3. The D-xylotriose site is built by Tyr556, Asp613, and Asn640. Asp642 contributes to the Ca(2+) binding site.

It belongs to the glycosyl hydrolase 11 (cellulase G) family.

Its subcellular location is the secreted. The enzyme catalyses Endohydrolysis of (1-&gt;4)-beta-D-xylosidic linkages in xylans.. It participates in glycan degradation; xylan degradation. In terms of biological role, endoxylanase that degrades arabinoxylan and glucuronoxylan to xylobiose and xylotriose (in vitro). This chain is Endo-1,4-beta-xylanase A (xynA), found in Thermoclostridium stercorarium (Clostridium stercorarium).